The chain runs to 397 residues: Subtilisin-like protease 3 (397 aa).

The first 19 residues, 1-19 (MGCIKVISVFLAAIAAVDA), serve as a signal peptide directing secretion. A propeptide spanning residues 20 to 116 (RAFFHNRGGS…VEHDRVVKLA (97 aa)) is cleaved from the precursor. The 82-residue stretch at 35 to 116 (SYIVVMKDGV…VEHDRVVKLA (82 aa)) folds into the Inhibitor I9 domain. The region spanning 126–397 (TWGLGRVSHR…NRLLYNGSGQ (272 aa)) is the Peptidase S8 domain. Residues D158 and H189 each act as charge relay system in the active site. N-linked (GlcNAc...) asparagine glycosylation is present at N250. S344 functions as the Charge relay system in the catalytic mechanism. N393 is a glycosylation site (N-linked (GlcNAc...) asparagine).

The protein belongs to the peptidase S8 family.

It is found in the secreted. Functionally, secreted subtilisin-like serine protease with keratinolytic activity that contributes to pathogenicity. The protein is Subtilisin-like protease 3 (SUB3) of Trichophyton tonsurans (Scalp ringworm fungus).